The sequence spans 439 residues: Ectonucleotide pyrophosphatase/phosphodiesterase family member 7 (439 aa).

The signal sequence occupies residues 1 to 21; it reads MGHSAVLLCVALAILPACVTG. Over 22–414 the chain is Extracellular; sequence APVQRQHKLL…ILRPMLRSGS (393 aa). Zn(2+)-binding residues include Asp36 and Thr72. Residues 69 to 75 form a required for enzyme activity region; that stretch reads VTMTSPC. The Nucleophile role is filled by Thr72. Asn93 contacts substrate. N-linked (GlcNAc...) asparagine glycans are attached at residues Asn97, Asn118, Asn143, and Asn165. Residues Asp196, His200, Asp243, and His244 each coordinate Zn(2+). N-linked (GlcNAc...) asparagine glycosylation occurs at Asn264. His350 contributes to the Zn(2+) binding site. The chain crosses the membrane as a helical span at residues 415 to 435; it reads ASLLSSQHHLVALLVGILTCL. Residues 436–439 lie on the Cytoplasmic side of the membrane; sequence AKVL.

Requires Zn(2+) as cofactor. N-glycosylated; required for activity and transport to the plasma membrane. Expressed in liver and small intestine.

The protein resides in the cell membrane. The enzyme catalyses a sphingomyelin + H2O = phosphocholine + an N-acylsphing-4-enine + H(+). It carries out the reaction a 1-O-alkyl-2-acetyl-sn-glycero-3-phosphocholine + H2O = a 1-O-alkyl-2-acetyl-sn-glycerol + phosphocholine + H(+). It catalyses the reaction 1-O-octadecyl-2-acetyl-sn-glycero-3-phosphocholine + H2O = 1-O-octadecyl-2-acetyl-sn-glycerol + phosphocholine + H(+). The catalysed reaction is 1-hexadecanoyl-sn-glycero-3-phosphocholine + H2O = 1-hexadecanoyl-sn-glycerol + phosphocholine + H(+). Choline-specific phosphodiesterase that hydrolyzes sphingomyelin releasing the ceramide and phosphocholine and therefore is involved in sphingomyelin digestion, ceramide formation, and fatty acid (FA) absorption in the gastrointestinal tract. Also has phospholipase C activity and can also cleave phosphocholine from palmitoyl lyso-phosphatidylcholine and platelet-activating factor (PAF) leading to its inactivation. Does not have nucleotide pyrophosphatase activity. May promote cholesterol absorption by affecting the levels of sphingomyelin derived from either diet or endogenous sources, in the intestinal lumen. This is Ectonucleotide pyrophosphatase/phosphodiesterase family member 7 from Mus musculus (Mouse).